Consider the following 255-residue polypeptide: Expansin-A25 (255 aa).

The signal sequence occupies residues 1–26; the sequence is MEYAILFATSLVITVLAASGFAPAHG. Positions 45 to 160 constitute an Expansin-like EG45 domain; that stretch reads GGACGYGNLY…QQVKCWRQGG (116 aa). Positions 170–249 constitute an Expansin-like CBD domain; that stretch reads FFELVLVSNV…WWSFGMTFTS (80 aa).

This sequence belongs to the expansin family. Expansin A subfamily. As to expression, expressed in panicles and flowers.

The protein localises to the secreted. It is found in the cell wall. Its subcellular location is the membrane. Its function is as follows. May cause loosening and extension of plant cell walls by disrupting non-covalent bonding between cellulose microfibrils and matrix glucans. No enzymatic activity has been found. May be required for rapid internodal elongation in deepwater rice during submergence. The protein is Expansin-A25 (EXPA25) of Oryza sativa subsp. japonica (Rice).